The sequence spans 174 residues: Endoribonuclease YbeY (174 aa).

Residues H129, H133, and H139 each coordinate Zn(2+).

This sequence belongs to the endoribonuclease YbeY family. It depends on Zn(2+) as a cofactor.

It is found in the cytoplasm. Single strand-specific metallo-endoribonuclease involved in late-stage 70S ribosome quality control and in maturation of the 3' terminus of the 16S rRNA. In Lactobacillus delbrueckii subsp. bulgaricus (strain ATCC 11842 / DSM 20081 / BCRC 10696 / JCM 1002 / NBRC 13953 / NCIMB 11778 / NCTC 12712 / WDCM 00102 / Lb 14), this protein is Endoribonuclease YbeY.